Consider the following 78-residue polypeptide: Protein EcdD (78 aa).

Involved in the non-oxidative decarboxylation and detoxification of phenolic derivatives under anaerobic conditions, however the precise biochemical function in metabolism of phenolic acid is unknown. The protein is Protein EcdD of Escherichia coli O157:H7.